A 429-amino-acid chain; its full sequence is Inner membrane transport protein RhmT (429 aa).

Residues 1-16 (MSTALLDAVVKKNRVR) lie on the Cytoplasmic side of the membrane. Residues 17-37 (LIPFMLALYVLAFLDRSNIGF) form a helical membrane-spanning segment. The Periplasmic portion of the chain corresponds to 38–54 (AKQTYQIDTGLSNEAYA). The helical transmembrane segment at 55 to 75 (LGAGIFFVVYAFLGVPANLLM) threads the bilayer. Topologically, residues 76 to 81 (RKLGAR) are cytoplasmic. The chain crosses the membrane as a helical span at residues 82–102 (TWIGTTTLLWGFLSAAMAWAD). The Periplasmic portion of the chain corresponds to 103-143 (TEAKFLIVRTLLRAAEAGFFPGMIYLTSQWFPQRNRASIMG). Residues 144 to 164 (LFYMGAPLALTLGSPLSGALL) form a helical membrane-spanning segment. The Cytoplasmic portion of the chain corresponds to 165 to 174 (EMHGFMGHPG). A helical transmembrane segment spans residues 175–195 (WFWMFVIEGLLAVGAGVFTFF). Over 196 to 242 (WLDDTPEQARFLSKQEKTLLINQLASEEQQKVTSRLSDALRNGRVWQ) the chain is Periplasmic. The helical transmembrane segment at 243–263 (LAIIYLTIQVAVYGLIFFLPT) threads the bilayer. Residues 264 to 274 (QVAALLGTKVG) are Cytoplasmic-facing. The helical transmembrane segment at 275-295 (FTASVVTAIPWVAALFGTWLI) threads the bilayer. Topologically, residues 296-324 (PRYSDKTGERRNVAALTLLAAGIGIGLSG) are periplasmic. A helical transmembrane segment spans residues 325 to 345 (LLSPVMAIVALCVAAIGFIAV). Residues 346–361 (QPVFWTMPTQLLSGTA) lie on the Cytoplasmic side of the membrane. Residues 362–382 (LAAGIGFVNLFGAVGGFIAPI) traverse the membrane as a helical segment. The Periplasmic segment spans residues 383–394 (LRVKAETLFASD). The helical transmembrane segment at 395–415 (AAGLLTLAAVAVIGSLIIFTL) threads the bilayer. At 416 to 429 (RVNRTVAQTDVAHH) the chain is on the cytoplasmic side.

It belongs to the major facilitator superfamily. Phthalate permease family.

It localises to the cell inner membrane. The chain is Inner membrane transport protein RhmT (rhmT) from Escherichia coli (strain K12).